The chain runs to 260 residues: Adenosine 5'-phosphosulfate reductase (260 aa).

[4Fe-4S] cluster-binding residues include cysteine 130, cysteine 131, cysteine 213, and cysteine 216. Cysteine 241 serves as the catalytic Nucleophile; cysteine thiosulfonate intermediate.

It belongs to the PAPS reductase family. CysH subfamily. Requires [4Fe-4S] cluster as cofactor.

It is found in the cytoplasm. It catalyses the reaction [thioredoxin]-disulfide + sulfite + AMP + 2 H(+) = adenosine 5'-phosphosulfate + [thioredoxin]-dithiol. Its pathway is sulfur metabolism; hydrogen sulfide biosynthesis; sulfite from sulfate. Catalyzes the formation of sulfite from adenosine 5'-phosphosulfate (APS) using thioredoxin as an electron donor. The chain is Adenosine 5'-phosphosulfate reductase from Agrobacterium fabrum (strain C58 / ATCC 33970) (Agrobacterium tumefaciens (strain C58)).